A 308-amino-acid chain; its full sequence is Hydroxyacylglutathione hydrolase, mitochondrial (308 aa).

Residues 1 to 13 (MVLGRGLLGRRSL) constitute a mitochondrion transit peptide. The Zn(2+) site is built by H102, H104, D106, and H107. Position 116 is an N6-acetyllysine (K116). Residues H158 and D182 each coordinate Zn(2+). Substrate-binding positions include 191–193 (KFY) and 221–223 (HEY). Zn(2+) is bound at residue H221. K229 bears the N6-acetyllysine; alternate mark. Position 229 is an N6-succinyllysine; alternate (K229). Residue 297–300 (RKEK) participates in substrate binding.

Belongs to the metallo-beta-lactamase superfamily. Glyoxalase II family. Monomer. Zn(2+) is required as a cofactor. As to expression, testis.

The protein resides in the mitochondrion matrix. It is found in the cytoplasm. It catalyses the reaction an S-(2-hydroxyacyl)glutathione + H2O = a 2-hydroxy carboxylate + glutathione + H(+). It carries out the reaction (R)-S-lactoylglutathione + H2O = (R)-lactate + glutathione + H(+). It functions in the pathway secondary metabolite metabolism; methylglyoxal degradation; (R)-lactate from methylglyoxal: step 2/2. Functionally, thiolesterase that catalyzes the hydrolysis of S-D-lactoyl-glutathione to form glutathione and D-lactic acid. The chain is Hydroxyacylglutathione hydrolase, mitochondrial (HAGH) from Macaca fascicularis (Crab-eating macaque).